A 162-amino-acid chain; its full sequence is D-beta-D-heptose 1-phosphate adenylyltransferase (162 aa).

It catalyses the reaction D-glycero-beta-D-manno-heptose 1-phosphate + ATP + H(+) = ADP-D-glycero-beta-D-manno-heptose + diphosphate. Its pathway is nucleotide-sugar biosynthesis; ADP-L-glycero-beta-D-manno-heptose biosynthesis; ADP-L-glycero-beta-D-manno-heptose from D-glycero-beta-D-manno-heptose 7-phosphate: step 3/4. The protein operates within bacterial outer membrane biogenesis; LPS core biosynthesis. Catalyzes the ADP transfer from ATP to D-glycero-beta-D-manno-heptose 1-phosphate, yielding ADP-D-glycero-beta-D-manno-heptose. Cannot use GTP, UTP, or CTP as substrate. Is not active against the alpha-anomer substrate. Is also able to catalyze the ADP transfer to beta-glucose 1-phosphate in vitro, yielding ADP-beta-glucose. In Bordetella bronchiseptica (strain ATCC BAA-588 / NCTC 13252 / RB50) (Alcaligenes bronchisepticus), this protein is D-beta-D-heptose 1-phosphate adenylyltransferase.